A 148-amino-acid polypeptide reads, in one-letter code: UPF0179 protein Mpal_0949 (148 aa).

It belongs to the UPF0179 family.

The sequence is that of UPF0179 protein Mpal_0949 from Methanosphaerula palustris (strain ATCC BAA-1556 / DSM 19958 / E1-9c).